The chain runs to 295 residues: uncharacterized protein (295 aa).

NAD(+) is bound by residues 11-25 and Thr101; that span reads GYIG…MAKR. Lys176 is a catalytic residue. Residue Lys252 participates in NAD(+) binding.

Belongs to the HIBADH-related family.

This is an uncharacterized protein from Mycobacterium tuberculosis (strain CDC 1551 / Oshkosh).